A 287-amino-acid polypeptide reads, in one-letter code: Toxin zeta (287 aa).

ATP is bound at residue 40–47; sequence GQPGSGKT. Asparagine 66 serves as a coordination point for substrate. Catalysis depends on aspartate 67, which acts as the Proton acceptor. Substrate is bound by residues glutamate 100, threonine 118, arginine 120, and threonine 128. Residues 267-287 are disordered; the sequence is KLESLQPPTPPIPKTPKLPGI. The span at 273 to 287 shows a compositional bias: pro residues; the sequence is PPTPPIPKTPKLPGI.

It belongs to the zeta toxin family. In the presence of the epsilon antitoxin forms an inactive PezA(2)PezT(2) heterotetramer. The heterotetramer is still able to bind the UNAG substrate.

The catalysed reaction is UDP-N-acetyl-alpha-D-glucosamine + ATP = UDP-N-acetyl-alpha-D-glucosamine 3'-phosphate + ADP + H(+). Its function is as follows. Toxic component of a type II toxin-antitoxin (TA) system. Phosphorylates UDP-N-acetyl-D-glucosamine (UNAG) on the 3'-hydroxyl group of the N-acetyl-D-glucosamine moiety, yielding UNAG-3P. UNAG-3P inhibits MurA, the first committed step in cell wall synthesis, which is then blocked. Phosphorylation is inhibited by cognate epsilon antitoxin. Part of a postsegregational killing (PSK) system involved in the killing of plasmid-free cells. The zeta toxin induces programmed cell death. This is Toxin zeta from Streptococcus pyogenes.